The chain runs to 1606 residues: Thrombospondin type-1 domain-containing protein 7B (1606 aa).

Positions 1-31 (MFPKSNLTVTCWVWRSMRKLFLLLSLLLSHA) are cleaved as a signal peptide. Residues 32 to 1555 (AHLEGKKDNQ…QPLDPDGRVK (1524 aa)) are Extracellular-facing. 18 TSP type-1 domains span residues 40-98 (NQFI…RVCD), 102-177 (DLFQ…IPCP), 179-233 (DCVV…ISCP), 336-392 (DCET…IVEG), 399-482 (PRYS…IPCS), 484-543 (DCIV…PMCY), 601-661 (DCVL…HSCM), 662-735 (QLHW…LPCK), 737-796 (DCIV…SLCP), 797-869 (VYRW…VPCR), 871-924 (DCTF…CPCD), 925-998 (EFIS…IPCP), 1000-1125 (DCKL…LMCP), 1127-1181 (ECVM…ENCF), 1182-1245 (QFQY…VECV), 1247-1302 (NCQL…TPCY), 1303-1368 (SWVL…VPCP), and 1370-1431 (DCHL…GKCY). N150, N190, and N219 each carry an N-linked (GlcNAc...) asparagine glycan. 3 disulfides stabilise this stretch: C411/C477, C431/C481, and C442/C466. 3 disulfides stabilise this stretch: C602/C643, C613/C617, and C655/C660. N683 is a glycosylation site (N-linked (GlcNAc...) asparagine). 3 cysteine pairs are disulfide-bonded: C738-C779, C749-C753, and C789-C795. N757 carries an N-linked (GlcNAc...) asparagine glycan. N842 is a glycosylation site (N-linked (GlcNAc...) asparagine). 3 disulfide bridges follow: C872-C907, C883-C887, and C921-C923. N-linked (GlcNAc...) asparagine glycosylation is present at N933. Intrachain disulfides connect C937-C993, C959-C997, C970-C983, C1001-C1038, C1012-C1016, and C1120-C1124. N1186 is a glycosylation site (N-linked (GlcNAc...) asparagine). Cystine bridges form between C1248–C1286, C1259–C1263, and C1296–C1301. An N-linked (GlcNAc...) asparagine glycan is attached at N1308. Intrachain disulfides connect C1371/C1415, C1382/C1386, and C1425/C1430. 2 N-linked (GlcNAc...) asparagine glycosylation sites follow: N1456 and N1524. A helical transmembrane segment spans residues 1556–1576 (IWVYGVSGGAFLIMIFLIFTS). Topologically, residues 1577–1606 (YLVCKKPKPHQSTPPQQKPLTLAYDGDLDM) are cytoplasmic. The segment at 1583–1606 (PKPHQSTPPQQKPLTLAYDGDLDM) is disordered. A compositionally biased stretch (polar residues) spans 1586 to 1595 (HQSTPPQQKP).

It localises to the membrane. This is Thrombospondin type-1 domain-containing protein 7B from Homo sapiens (Human).